The chain runs to 25 residues: Bifunctional chitinase/lysozyme (25 aa).

Belongs to the glycosyl hydrolase 19 family. Chitinase class I subfamily. As to quaternary structure, monomer.

It localises to the secreted. Its subcellular location is the extracellular space. The enzyme catalyses Random endo-hydrolysis of N-acetyl-beta-D-glucosaminide (1-&gt;4)-beta-linkages in chitin and chitodextrins.. The catalysed reaction is Hydrolysis of (1-&gt;4)-beta-linkages between N-acetylmuramic acid and N-acetyl-D-glucosamine residues in a peptidoglycan and between N-acetyl-D-glucosamine residues in chitodextrins.. Functionally, bifunctional enzyme with lysozyme/chitinase activity. The sequence is that of Bifunctional chitinase/lysozyme from Carica papaya (Papaya).